A 293-amino-acid polypeptide reads, in one-letter code: Ribosomal protein L11 methyltransferase (293 aa).

Residues Thr-145, Gly-166, Asp-188, and Asn-230 each contribute to the S-adenosyl-L-methionine site.

Belongs to the methyltransferase superfamily. PrmA family.

Its subcellular location is the cytoplasm. It carries out the reaction L-lysyl-[protein] + 3 S-adenosyl-L-methionine = N(6),N(6),N(6)-trimethyl-L-lysyl-[protein] + 3 S-adenosyl-L-homocysteine + 3 H(+). In terms of biological role, methylates ribosomal protein L11. This Escherichia coli O7:K1 (strain IAI39 / ExPEC) protein is Ribosomal protein L11 methyltransferase.